A 498-amino-acid polypeptide reads, in one-letter code: Angiopoietin-1 (498 aa).

Residues 1-19 (MTVFLSFAFLAAILTHIGC) form the signal peptide. N-linked (GlcNAc...) asparagine glycosylation is found at Asn92, Asn122, Asn154, Asn243, and Asn295. The stretch at 158–254 (RLEIQLLENS…SVLQKQQLEL (97 aa)) forms a coiled coil. The Fibrinogen C-terminal domain maps to 277–497 (KEEVKPFRDC…STTMMIRPLD (221 aa)). 2 disulfides stabilise this stretch: Cys286–Cys315 and Cys439–Cys452.

In terms of assembly, homooligomer. Interacts with TEK/TIE2. Interacts with SVEP1/polydom. Interacts with THBD; this interaction significantly inhibits the generation of activated PC and TAFIa/CPB2 by the thrombin/thrombomodulin complex.

The protein resides in the secreted. Binds and activates TIE2 receptor by inducing its tyrosine phosphorylation. Implicated in endothelial developmental processes later and distinct from that of VEGF. Appears to play a crucial role in mediating reciprocal interactions between the endothelium and surrounding matrix and mesenchyme. Mediates blood vessel maturation/stability. It may play an important role in the heart early development. This Sus scrofa (Pig) protein is Angiopoietin-1 (ANGPT1).